A 400-amino-acid polypeptide reads, in one-letter code: S-adenosylmethionine synthase (400 aa).

His15 is an ATP binding site. Residue Asp17 participates in Mg(2+) binding. K(+) is bound at residue Glu43. Glu56 and Gln99 together coordinate L-methionine. The tract at residues 99 to 109 (QSLEIGAGVDT) is flexible loop. ATP is bound by residues 174–176 (DGK), Asp254, 260–261 (RK), Ala277, and Lys281. Residue Asp254 coordinates L-methionine. L-methionine is bound at residue Lys285.

This sequence belongs to the AdoMet synthase family. In terms of assembly, homotetramer; dimer of dimers. Mg(2+) serves as cofactor. The cofactor is K(+).

It localises to the cytoplasm. It carries out the reaction L-methionine + ATP + H2O = S-adenosyl-L-methionine + phosphate + diphosphate. Its pathway is amino-acid biosynthesis; S-adenosyl-L-methionine biosynthesis; S-adenosyl-L-methionine from L-methionine: step 1/1. Its function is as follows. Catalyzes the formation of S-adenosylmethionine (AdoMet) from methionine and ATP. The overall synthetic reaction is composed of two sequential steps, AdoMet formation and the subsequent tripolyphosphate hydrolysis which occurs prior to release of AdoMet from the enzyme. The protein is S-adenosylmethionine synthase of Corynebacterium kroppenstedtii (strain DSM 44385 / JCM 11950 / CIP 105744 / CCUG 35717).